The chain runs to 354 residues: Nicotinate-nucleotide--dimethylbenzimidazole phosphoribosyltransferase (354 aa).

The active-site Proton acceptor is the glutamate 322.

This sequence belongs to the CobT family.

The catalysed reaction is 5,6-dimethylbenzimidazole + nicotinate beta-D-ribonucleotide = alpha-ribazole 5'-phosphate + nicotinate + H(+). The protein operates within nucleoside biosynthesis; alpha-ribazole biosynthesis; alpha-ribazole from 5,6-dimethylbenzimidazole: step 1/2. Its function is as follows. Catalyzes the synthesis of alpha-ribazole-5'-phosphate from nicotinate mononucleotide (NAMN) and 5,6-dimethylbenzimidazole (DMB). The chain is Nicotinate-nucleotide--dimethylbenzimidazole phosphoribosyltransferase from Solidesulfovibrio magneticus (strain ATCC 700980 / DSM 13731 / RS-1) (Desulfovibrio magneticus).